The following is a 119-amino-acid chain: Large ribosomal subunit protein eL31y (119 aa).

The protein belongs to the eukaryotic ribosomal protein eL31 family.

This is Large ribosomal subunit protein eL31y (RPL31B) from Arabidopsis thaliana (Mouse-ear cress).